The following is a 159-amino-acid chain: MFPFALLYVLSVSFRKIFILQLVGLVLTYDFTNCDFEKIKAAYLSTISKDLITYMSGTKSTEFNNTVSCSNRPHCLTEIQSLTFNPTAGCASLAKEMFAMKTKAALAIWCPGYSETQINATQAMKKRRKRKVTTNKCLEQVSQLQGLWRRFNRPLLKQQ.

The first 28 residues, 1–28, serve as a signal peptide directing secretion; sequence MFPFALLYVLSVSFRKIFILQLVGLVLT. 3 disulfides stabilise this stretch: Cys34/Cys110, Cys69/Cys75, and Cys90/Cys137. Asn64 carries N-linked (GlcNAc...) asparagine glycosylation. Asn119 is a glycosylation site (N-linked (GlcNAc...) asparagine).

Interacts with a receptor composed of CRLF2 and IL7R. Binding of TSLP to CRLF2/TSLPR is a mechanistic prerequisite for recruitment of IL7R to the high-affinity ternary complex. As to expression, isoform 1 is expressed in a number of tissues including heart, liver and prostate. Isoform 2 is the predominant form in keratinocytes of oral mucosa, skin and in salivary glands. It is secreted into saliva.

The protein resides in the secreted. In terms of biological role, cytokine that induces the release of T-cell-attracting chemokines from monocytes and, in particular, enhances the maturation of CD11c(+) dendritic cells. Can induce allergic inflammation by directly activating mast cells. Its function is as follows. May act as an antimicrobial peptide in the oral cavity and on the skin. The chain is Thymic stromal lymphopoietin (TSLP) from Homo sapiens (Human).